We begin with the raw amino-acid sequence, 149 residues long: Large ribosomal subunit protein bL9 (149 aa).

The protein belongs to the bacterial ribosomal protein bL9 family.

In terms of biological role, binds to the 23S rRNA. The sequence is that of Large ribosomal subunit protein bL9 from Proteus mirabilis (strain HI4320).